Consider the following 318-residue polypeptide: Transaldolase (318 aa).

The active-site Schiff-base intermediate with substrate is Lys132.

This sequence belongs to the transaldolase family. Type 1 subfamily. As to quaternary structure, homodimer.

It is found in the cytoplasm. The enzyme catalyses D-sedoheptulose 7-phosphate + D-glyceraldehyde 3-phosphate = D-erythrose 4-phosphate + beta-D-fructose 6-phosphate. It participates in carbohydrate degradation; pentose phosphate pathway; D-glyceraldehyde 3-phosphate and beta-D-fructose 6-phosphate from D-ribose 5-phosphate and D-xylulose 5-phosphate (non-oxidative stage): step 2/3. Its function is as follows. Transaldolase is important for the balance of metabolites in the pentose-phosphate pathway. This Shewanella sediminis (strain HAW-EB3) protein is Transaldolase.